Reading from the N-terminus, the 322-residue chain is tRNA-specific adenosine deaminase subunit TAD3 (322 aa).

Residues E162 to L283 form the CMP/dCMP-type deaminase domain. H216, C254, C257, and C322 together coordinate Zn(2+).

Belongs to the cytidine and deoxycytidylate deaminase family. ADAT3 subfamily. In terms of assembly, heterodimer with TAD2.

The protein localises to the cytoplasm. The protein resides in the nucleus. Its subcellular location is the peroxisome. Structural subunit of tRNA-specific adenosine deaminase, which deaminates adenosine-34 (the first, also called wobble position of the anticodon) to inosine in many tRNAs. Inosine-34 allows the decoding of 3 different nucleotides at the third position of mRNA codons, as inosine is able to pair with U, C, and A. This is tRNA-specific adenosine deaminase subunit TAD3 (TAD3) from Saccharomyces cerevisiae (strain ATCC 204508 / S288c) (Baker's yeast).